A 498-amino-acid polypeptide reads, in one-letter code: POU domain protein 2, isoform A (498 aa).

Over residues 1 to 30 the composition is skewed to low complexity; that stretch reads MMVLQQQQQQRLWDATTTSNTNTQTQQSAN. Residues 1–35 form a disordered region; it reads MMVLQQQQQQRLWDATTTSNTNTQTQQSANVESTP. A phosphoserine mark is found at Ser-72, Ser-211, Ser-215, Ser-217, and Ser-219. Residues 191 to 273 form a disordered region; it reads QMKQQQREDP…STPKPTSGLT (83 aa). Low complexity predominate over residues 207 to 222; that stretch reads PLAKSPLRSPSLSPVP. Polar residues predominate over residues 228-251; that stretch reads QQRTPPNSMTANSLGMSSAVMTPN. Positions 252–270 are enriched in low complexity; that stretch reads TPSMQQQPQLQQSTPKPTS. The 75-residue stretch at 286–360 folds into the POU-specific domain; sequence EETTDLEELE…LLQKWLEDAD (75 aa). The segment at residues 391–450 is a DNA-binding region (homeobox); it reads RRKKRTSIETTVRTTLEKAFLMNCKPTSEEISQLSERLNMDKEVIRVWFCNRRQKEKRIN.

The protein belongs to the POU transcription factor family. Class-2 subfamily. In terms of tissue distribution, initial expression in cellular blastoderm stage, then in ectodermal stripes during germband extension. Broad expression in the neuroectoderm followed by limitation to discrete subsets of CNS cells, and expression in specific PNS neurons and support cells.

The protein resides in the nucleus. Its function is as follows. DNA-binding regulatory protein implicated in early development. Involved in neuronal cell fate decision. May act as an octamer-dependent activator of transcription. Could also play an early role in specific ectodermal cells, and a subsequent role in the embryonic nervous system. In Drosophila melanogaster (Fruit fly), this protein is POU domain protein 2, isoform A (pdm2).